The sequence spans 357 residues: Phosphoribosylformylglycinamidine cyclo-ligase (357 aa).

Belongs to the AIR synthase family.

It localises to the cytoplasm. The enzyme catalyses 2-formamido-N(1)-(5-O-phospho-beta-D-ribosyl)acetamidine + ATP = 5-amino-1-(5-phospho-beta-D-ribosyl)imidazole + ADP + phosphate + H(+). It participates in purine metabolism; IMP biosynthesis via de novo pathway; 5-amino-1-(5-phospho-D-ribosyl)imidazole from N(2)-formyl-N(1)-(5-phospho-D-ribosyl)glycinamide: step 2/2. The sequence is that of Phosphoribosylformylglycinamidine cyclo-ligase from Rhizobium johnstonii (strain DSM 114642 / LMG 32736 / 3841) (Rhizobium leguminosarum bv. viciae).